We begin with the raw amino-acid sequence, 855 residues long: MNESFDKDFSNHTPMMQQYLKLKAQHPEILLFYRMGDFYELFYDDAKRASQLLDISLTKRGASAGEPIPMAGIPHHAVENYLAKLVNQGESVAICEQIGDPATSKGPVERKVVRIVTPGTISDEALLQERQDNLLAAIWQDGKGYGYATLDISSGRFRLSEPADRETMAAELQRTNPAELLYAEDFAEMALIEGRRGLRRRPLWEFEIDTARQQLNLQFGTRDLVGFGVENASRGLCAAGCLLQYVKDTQRTSLPHIRSITMERQQDSIIMDAATRRNLEITQNLAGGVENTLAAVLDCTVTPMGSRMLKRWLHMPVRNTDILRERQQTIGALQDTVSELQPVLRQVGDLERILARLALRTARPRDLARMRHAFQQLPELHAQLETVGSAPVQALRKKMGDFAELRDLLERAIIDAPPVLVRDGGVIAPGYHEELDEWRALADGATDYLDRLEIRERERTGLDTLKVGYNAVHGYYIQISRGQSHLAPINYVRRQTLKNAERYIIPELKEYEDKVLTSKGKALALEKQLYDELFDLLLPHLADLQQSANALAELDVLVNLAERAWTLNYTCPTFTDKPGIRITEGRHPVVEQVLNEPFIANPLNLSPQRRMLIITGPNMGGKSTYMRQTALIALLAYIGSYVPAQNVEIGPIDRIFTRVGAADDLASGRSTFMVEMTETANILHNATENSLVLMDEIGRGTSTYDGLSLAWACAENLANKIKALTLFATHYFELTQLPEKMEGVANVHLDALEHGDTIAFMHSVQDGAASKSYGLAVAALAGVPKEVIKRARQKLRELESISPNAAATQVDGTQMSLLAAPEETSPAVEALENLDPDSLTPRQALEWIYRLKSLV.

616-623 (GPNMGGKS) serves as a coordination point for ATP.

This sequence belongs to the DNA mismatch repair MutS family.

Functionally, this protein is involved in the repair of mismatches in DNA. It is possible that it carries out the mismatch recognition step. This protein has a weak ATPase activity. The polypeptide is DNA mismatch repair protein MutS (Salmonella paratyphi A (strain ATCC 9150 / SARB42)).